The primary structure comprises 290 residues: Nucleoid occlusion protein (290 aa).

A DNA-binding region (H-T-H motif) is located at residues 153-172; sequence EALAQRLGKGQSTIANKLRL.

It belongs to the ParB family.

The protein localises to the cytoplasm. The protein resides in the nucleoid. Effects nucleoid occlusion by binding relatively nonspecifically to DNA and preventing the assembly of the division machinery in the vicinity of the nucleoid, especially under conditions that disturb the cell cycle. It helps to coordinate cell division and chromosome segregation by preventing the formation of the Z ring through the nucleoid, which would cause chromosome breakage. This chain is Nucleoid occlusion protein, found in Bacillus cereus (strain ATCC 10987 / NRS 248).